The following is a 531-amino-acid chain: MILSHRYTLIALAAAILSSGAHAAGASVTASWGNVAEPSLPADSAVCKTLAATITPVSGSIDTVDGNPSNSQPDASRIQTAIDNCPAGQAVRLVKGSAGESGFLSGSLKLKSGVTLWIDTGVTLFASRNPADFDNGVGTCGTATTSNTKSCNALIVARDTVGSGIVGDGIIDGRGGSLVTSGPNANRLTWWDIAYLNKTKGLNQQNPRLVQLYNGSAFTLYRVTVQNSPNFHIVTTGTAGVTAWGIKIVTPSLAYTVPGYKCAAGTTPDKVTPATCFTPETVKNTDGFDPGQSTNVVLANSYISTGDDHVAIKASGGATRNLLFAHNHFYYGHGLSIGSETDGGVSNMQVTDLAMDGNDSSGGNGLRIKSDISRGGKVNNIVYNGICMRNVKEPLVFDPFYSTAKGSLYPNFTNIVVKNFHDLGSAKGIARTMTFLGYEAKKRTNPLTLTLDNVVFDGTQPAFDVAHNGGPASPNGTHFTFGGNGPVSFANAIVTSSTTDVTVTGTPGTAAAVDCSNAFVPLKSVAPTSPI.

A signal peptide spans 1–23 (MILSHRYTLIALAAAILSSGAHA). Asp307 functions as the Proton donor in the catalytic mechanism. His333 is an active-site residue. Residues 518–531 (AFVPLKSVAPTSPI) are required for PGA export across the outer membrane and catalytic activity.

Belongs to the glycosyl hydrolase 28 family. Monomer.

It localises to the secreted. The enzyme catalyses (1,4-alpha-D-galacturonosyl)n+m + H2O = (1,4-alpha-D-galacturonosyl)n + (1,4-alpha-D-galacturonosyl)m.. Contributes to the wilt disease production on tomato. In Ralstonia nicotianae (strain ATCC BAA-1114 / GMI1000) (Ralstonia solanacearum), this protein is Polygalacturonase (pglA).